Reading from the N-terminus, the 255-residue chain is Ditrans,polycis-undecaprenyl-diphosphate synthase ((2E,6E)-farnesyl-diphosphate specific) (255 aa).

Asp-21 is a catalytic residue. Position 21 (Asp-21) interacts with Mg(2+). Substrate contacts are provided by residues 22-25 (GNGR), Trp-26, Arg-34, His-38, and 66-68 (SSE). Asn-69 (proton acceptor) is an active-site residue. Substrate contacts are provided by residues Trp-70, Arg-72, Arg-189, and 195-197 (RIS). Glu-208 is a binding site for Mg(2+).

It belongs to the UPP synthase family. In terms of assembly, homodimer. The cofactor is Mg(2+).

The enzyme catalyses 8 isopentenyl diphosphate + (2E,6E)-farnesyl diphosphate = di-trans,octa-cis-undecaprenyl diphosphate + 8 diphosphate. Catalyzes the sequential condensation of isopentenyl diphosphate (IPP) with (2E,6E)-farnesyl diphosphate (E,E-FPP) to yield (2Z,6Z,10Z,14Z,18Z,22Z,26Z,30Z,34E,38E)-undecaprenyl diphosphate (di-trans,octa-cis-UPP). UPP is the precursor of glycosyl carrier lipid in the biosynthesis of bacterial cell wall polysaccharide components such as peptidoglycan and lipopolysaccharide. The sequence is that of Ditrans,polycis-undecaprenyl-diphosphate synthase ((2E,6E)-farnesyl-diphosphate specific) from Xylella fastidiosa (strain 9a5c).